A 282-amino-acid polypeptide reads, in one-letter code: Kallikrein-11 (282 aa).

The first 50 residues, 1 to 50 (MQRLRWLRDWKSSGRGLTAAKEPGARSSPLQAMRILQLILLALATGLVGG), serve as a signal peptide directing secretion. A propeptide spans 51–53 (ETR) (activation peptide). The Peptidase S1 domain maps to 53–280 (RIIKGFECKP…YVDWIQETMK (228 aa)). 6 disulfides stabilise this stretch: Cys60/Cys195, Cys79/Cys95, Cys167/Cys269, Cys174/Cys241, Cys206/Cys220, and Cys231/Cys256. Residue His94 is the Charge relay system of the active site. A glycan (N-linked (GlcNAc...) asparagine) is linked at Asn131. Asp142 functions as the Charge relay system in the catalytic mechanism. N-linked (GlcNAc...) asparagine glycans are attached at residues Asn197 and Asn213. Catalysis depends on Ser235, which acts as the Charge relay system. N-linked (GlcNAc...) asparagine glycosylation is present at Asn242.

Belongs to the peptidase S1 family. Kallikrein subfamily. In terms of processing, about 40% of KLK11 is inactivated by internal cleavage after Arg-188. This proteolytic inactivation may be effected by plasminogen. As to expression, expressed in brain, skin and prostate. Isoform 1 is expressed preferentially in brain. Isoform 2 is expressed in prostate. Present in seminal plasma at concentrations ranging from 2 to 37 microg/mL (at protein level).

It is found in the secreted. Its subcellular location is the golgi apparatus. Its function is as follows. Possible multifunctional protease. Efficiently cleaves 'bz-Phe-Arg-4-methylcoumaryl-7-amide', a kallikrein substrate, and weakly cleaves other substrates for kallikrein and trypsin. Cleaves synthetic peptides after arginine but not lysine residues. The protein is Kallikrein-11 (KLK11) of Homo sapiens (Human).